The primary structure comprises 270 residues: Glucosamine-6-phosphate deaminase (270 aa).

Aspartate 72 serves as the catalytic Proton acceptor; for enolization step. Aspartate 141 acts as the For ring-opening step in catalysis. Histidine 143 functions as the Proton acceptor; for ring-opening step in the catalytic mechanism. Glutamate 148 serves as the catalytic For ring-opening step.

This sequence belongs to the glucosamine/galactosamine-6-phosphate isomerase family. NagB subfamily.

The catalysed reaction is alpha-D-glucosamine 6-phosphate + H2O = beta-D-fructose 6-phosphate + NH4(+). It functions in the pathway amino-sugar metabolism; N-acetylneuraminate degradation; D-fructose 6-phosphate from N-acetylneuraminate: step 5/5. Allosterically activated by N-acetylglucosamine 6-phosphate (GlcNAc6P). Functionally, catalyzes the reversible isomerization-deamination of glucosamine 6-phosphate (GlcN6P) to form fructose 6-phosphate (Fru6P) and ammonium ion. This Bacteroides fragilis (strain ATCC 25285 / DSM 2151 / CCUG 4856 / JCM 11019 / LMG 10263 / NCTC 9343 / Onslow / VPI 2553 / EN-2) protein is Glucosamine-6-phosphate deaminase.